A 249-amino-acid polypeptide reads, in one-letter code: 5'-nucleotidase SurE (249 aa).

Positions 8, 9, 39, and 91 each coordinate a divalent metal cation.

The protein belongs to the SurE nucleotidase family. A divalent metal cation serves as cofactor.

The protein localises to the cytoplasm. The enzyme catalyses a ribonucleoside 5'-phosphate + H2O = a ribonucleoside + phosphate. Functionally, nucleotidase that shows phosphatase activity on nucleoside 5'-monophosphates. In Azotobacter vinelandii (strain DJ / ATCC BAA-1303), this protein is 5'-nucleotidase SurE.